We begin with the raw amino-acid sequence, 353 residues long: tRNA-specific 2-thiouridylase MnmA 2 (353 aa).

ATP is bound by residues 9 to 16 (AMSGGVDS) and M35. The active-site Nucleophile is C98. Cysteines 98 and 194 form a disulfide. Position 122 (G122) interacts with ATP. Residues 144–146 (KDQ) are interaction with tRNA. The Cysteine persulfide intermediate role is filled by C194. Residues 300-301 (RY) form an interaction with tRNA region.

It belongs to the MnmA/TRMU family.

It is found in the cytoplasm. It carries out the reaction S-sulfanyl-L-cysteinyl-[protein] + uridine(34) in tRNA + AH2 + ATP = 2-thiouridine(34) in tRNA + L-cysteinyl-[protein] + A + AMP + diphosphate + H(+). Catalyzes the 2-thiolation of uridine at the wobble position (U34) of tRNA, leading to the formation of s(2)U34. In Clostridium botulinum (strain Loch Maree / Type A3), this protein is tRNA-specific 2-thiouridylase MnmA 2.